A 1225-amino-acid chain; its full sequence is DNA-directed RNA polymerase subunit beta' (1225 aa).

Zn(2+) is bound by residues Cys60, Cys62, Cys75, and Cys78. Mg(2+)-binding residues include Asp450, Asp452, and Asp454. Residues Cys818, Cys892, Cys899, and Cys902 each coordinate Zn(2+).

Belongs to the RNA polymerase beta' chain family. As to quaternary structure, the RNAP catalytic core consists of 2 alpha, 1 beta, 1 beta' and 1 omega subunit. When a sigma factor is associated with the core the holoenzyme is formed, which can initiate transcription. Requires Mg(2+) as cofactor. Zn(2+) is required as a cofactor.

The enzyme catalyses RNA(n) + a ribonucleoside 5'-triphosphate = RNA(n+1) + diphosphate. Functionally, DNA-dependent RNA polymerase catalyzes the transcription of DNA into RNA using the four ribonucleoside triphosphates as substrates. The sequence is that of DNA-directed RNA polymerase subunit beta' from Streptococcus pneumoniae (strain ATCC BAA-255 / R6).